The primary structure comprises 324 residues: Acetyl-coenzyme A carboxylase carboxyl transferase subunit alpha (324 aa).

The CoA carboxyltransferase C-terminal domain occupies 44-298; it reads QLERRAEELR…KQTLIDTIDE (255 aa).

It belongs to the AccA family. Acetyl-CoA carboxylase is a heterohexamer composed of biotin carboxyl carrier protein (AccB), biotin carboxylase (AccC) and two subunits each of ACCase subunit alpha (AccA) and ACCase subunit beta (AccD).

It localises to the cytoplasm. The catalysed reaction is N(6)-carboxybiotinyl-L-lysyl-[protein] + acetyl-CoA = N(6)-biotinyl-L-lysyl-[protein] + malonyl-CoA. Its pathway is lipid metabolism; malonyl-CoA biosynthesis; malonyl-CoA from acetyl-CoA: step 1/1. Functionally, component of the acetyl coenzyme A carboxylase (ACC) complex. First, biotin carboxylase catalyzes the carboxylation of biotin on its carrier protein (BCCP) and then the CO(2) group is transferred by the carboxyltransferase to acetyl-CoA to form malonyl-CoA. This is Acetyl-coenzyme A carboxylase carboxyl transferase subunit alpha from Rippkaea orientalis (strain PCC 8801 / RF-1) (Cyanothece sp. (strain PCC 8801)).